Here is a 152-residue protein sequence, read N- to C-terminus: uncharacterized protein (152 aa).

4 helical membrane-spanning segments follow: residues 2–22, 26–46, 92–112, and 128–148; these read ENLIVAISNFPAVLPIGLSFL, FITFGTITFVSIASFISHLIE, VVPIVNNKWLFAMTIPVFILL, and YIITHCMWHAGIFGLMYYFLK.

Its subcellular location is the membrane. This is an uncharacterized protein from Acanthamoeba polyphaga mimivirus (APMV).